Reading from the N-terminus, the 940-residue chain is Isoleucine--tRNA ligase (940 aa).

The short motif at 58 to 68 (PYANGSIHIGH) is the 'HIGH' region element. Glu563 contributes to the L-isoleucyl-5'-AMP binding site. A 'KMSKS' region motif is present at residues 604-608 (KMSKS). Lys607 provides a ligand contact to ATP. Residues Cys902, Cys905, Cys922, and Cys925 each contribute to the Zn(2+) site.

The protein belongs to the class-I aminoacyl-tRNA synthetase family. IleS type 1 subfamily. In terms of assembly, monomer. Zn(2+) is required as a cofactor.

It is found in the cytoplasm. It carries out the reaction tRNA(Ile) + L-isoleucine + ATP = L-isoleucyl-tRNA(Ile) + AMP + diphosphate. Functionally, catalyzes the attachment of isoleucine to tRNA(Ile). As IleRS can inadvertently accommodate and process structurally similar amino acids such as valine, to avoid such errors it has two additional distinct tRNA(Ile)-dependent editing activities. One activity is designated as 'pretransfer' editing and involves the hydrolysis of activated Val-AMP. The other activity is designated 'posttransfer' editing and involves deacylation of mischarged Val-tRNA(Ile). In Marinomonas sp. (strain MWYL1), this protein is Isoleucine--tRNA ligase.